The chain runs to 300 residues: Acetylglutamate kinase (300 aa).

Residues 73–74 (GG), R95, and N197 each bind substrate.

The protein belongs to the acetylglutamate kinase family. ArgB subfamily.

The protein resides in the cytoplasm. It catalyses the reaction N-acetyl-L-glutamate + ATP = N-acetyl-L-glutamyl 5-phosphate + ADP. Its pathway is amino-acid biosynthesis; L-arginine biosynthesis; N(2)-acetyl-L-ornithine from L-glutamate: step 2/4. Its function is as follows. Catalyzes the ATP-dependent phosphorylation of N-acetyl-L-glutamate. The sequence is that of Acetylglutamate kinase from Bordetella avium (strain 197N).